The following is an 801-amino-acid chain: Phenylalanine--tRNA ligase beta subunit (801 aa).

The 115-residue stretch at 39 to 153 folds into the tRNA-binding domain; sequence AEGLSKLVVG…EGAIPGDSIF (115 aa). Residues 406-481 form the B5 domain; it reads TEPVEVSTTL…RIYGYEKLPT (76 aa). 4 residues coordinate Mg(2+): Asp459, Asp465, Glu468, and Glu469. One can recognise an FDX-ACB domain in the interval 708–801; sequence TKYPSVSRDI…LVEKVNAEIR (94 aa).

This sequence belongs to the phenylalanyl-tRNA synthetase beta subunit family. Type 1 subfamily. In terms of assembly, tetramer of two alpha and two beta subunits. The cofactor is Mg(2+).

Its subcellular location is the cytoplasm. It catalyses the reaction tRNA(Phe) + L-phenylalanine + ATP = L-phenylalanyl-tRNA(Phe) + AMP + diphosphate + H(+). The chain is Phenylalanine--tRNA ligase beta subunit from Streptococcus agalactiae serotype V (strain ATCC BAA-611 / 2603 V/R).